Reading from the N-terminus, the 561-residue chain is Excitatory amino acid transporter 4 (561 aa).

Over 1 to 52 the chain is Cytoplasmic; that stretch reads MSSHGNSLFLRESGAGGGCLQGLQDSLQQRALRTRLRLQTMTREHVRRFLRR. Position 2 is a phosphoserine (Ser2). 3 helical membrane passes run 53–73, 96–116, and 130–150; these read NAFI…AFAL, MLQM…MASL, and VYYM…VTII. 3 N-linked (GlcNAc...) asparagine glycosylation sites follow: Asn213, Asn229, and Asn236. Transmembrane regions (helical) follow at residues 259 to 282, 292 to 319, and 341 to 362; these read SANG…IGGM, FFDS…LFLI, and LTVI…YFLV. The discontinuously helical intramembrane region spans 368–398; that stretch reads FPFIGGMLQALITAMGTSSSSATLPITFRCL. An L-aspartate-binding site is contributed by 385–387; the sequence is SSS. The helical transmembrane segment at 408–434 threads the bilayer; the sequence is ITRFVLPVGATVNMDGTALYEALAAIF. Positions 416, 418, and 420 each coordinate Na(+). L-aspartate-binding positions include Thr424, 465 to 469, Asp498, and Asn505; that span reads IPQAG. An intramembrane region (discontinuously helical) is located at residues 448–481; it reads ITTISITATAASVGAAGIPQAGLVTMVIVLTSVG. The helical transmembrane segment at 495-516 threads the bilayer; that stretch reads WFLDRLRTMTNVLGDSIGAAVI. Asn505 and Asp509 together coordinate Na(+).

The protein belongs to the dicarboxylate/amino acid:cation symporter (DAACS) (TC 2.A.23) family. SLC1A6 subfamily. In terms of assembly, homotrimer. As to expression, brain specific.

The protein resides in the cell membrane. It catalyses the reaction K(+)(in) + L-glutamate(out) + 3 Na(+)(out) + H(+)(out) = K(+)(out) + L-glutamate(in) + 3 Na(+)(in) + H(+)(in). The enzyme catalyses K(+)(in) + L-aspartate(out) + 3 Na(+)(out) + H(+)(out) = K(+)(out) + L-aspartate(in) + 3 Na(+)(in) + H(+)(in). It carries out the reaction D-aspartate(out) + K(+)(in) + 3 Na(+)(out) + H(+)(out) = D-aspartate(in) + K(+)(out) + 3 Na(+)(in) + H(+)(in). In terms of biological role, sodium-dependent, high-affinity amino acid transporter that mediates the uptake of L-glutamate and also L-aspartate and D-aspartate. Functions as a symporter that transports one amino acid molecule together with two or three Na(+) ions and one proton, in parallel with the counter-transport of one K(+) ion. Mediates Cl(-) flux that is not coupled to amino acid transport; this avoids the accumulation of negative charges due to aspartate and Na(+) symport. Plays a redundant role in the rapid removal of released glutamate from the synaptic cleft, which is essential for terminating the postsynaptic action of glutamate. In Mus musculus (Mouse), this protein is Excitatory amino acid transporter 4 (Slc1a6).